The sequence spans 131 residues: Small ribosomal subunit protein uS9 (131 aa).

Belongs to the universal ribosomal protein uS9 family.

The polypeptide is Small ribosomal subunit protein uS9 (Mannheimia succiniciproducens (strain KCTC 0769BP / MBEL55E)).